The sequence spans 168 residues: Disulfide bond formation protein B (168 aa).

The Cytoplasmic portion of the chain corresponds to 1-11 (MSNPMRPVRSI). The helical transmembrane segment at 12–28 (LLAIFTGCAGLIGYALY) threads the bilayer. Residues 29-46 (LQLVENLLPCPLCVVQRM) are Periplasmic-facing. A disulfide bridge connects residues cysteine 38 and cysteine 41. Residues 47-63 (AYWLIGLTALAGFFHTP) traverse the membrane as a helical segment. Topologically, residues 64-69 (ETTGRR) are cytoplasmic. The helical transmembrane segment at 70-87 (IYAGLMAVFAFTGGLVAL) threads the bilayer. Topologically, residues 88–143 (RQAWLVRYPEAFECGISPEEAFLNALPLARWWPVMFEANGDCADVTWKFASLTLPD) are periplasmic. A disulfide bridge connects residues cysteine 101 and cysteine 129. A helical membrane pass occupies residues 144–162 (WSAIFFMILAALSIYVLLV). The Cytoplasmic portion of the chain corresponds to 163-168 (RENQRE).

Belongs to the DsbB family.

It localises to the cell inner membrane. Its function is as follows. Required for disulfide bond formation in some periplasmic proteins. Acts by oxidizing the DsbA protein. The protein is Disulfide bond formation protein B of Nitrosospira multiformis (strain ATCC 25196 / NCIMB 11849 / C 71).